The sequence spans 752 residues: Maltodextrin phosphorylase (752 aa).

N6-(pyridoxal phosphate)lysine is present on lysine 603.

This sequence belongs to the glycogen phosphorylase family. The cofactor is pyridoxal 5'-phosphate.

It carries out the reaction [(1-&gt;4)-alpha-D-glucosyl](n) + phosphate = [(1-&gt;4)-alpha-D-glucosyl](n-1) + alpha-D-glucose 1-phosphate. Phosphorylase is an important allosteric enzyme in carbohydrate metabolism. Enzymes from different sources differ in their regulatory mechanisms and in their natural substrates. However, all known phosphorylases share catalytic and structural properties. The polypeptide is Maltodextrin phosphorylase (malP) (Streptococcus pneumoniae serotype 4 (strain ATCC BAA-334 / TIGR4)).